We begin with the raw amino-acid sequence, 273 residues long: Bis(5'-nucleosyl)-tetraphosphatase, symmetrical (273 aa).

This sequence belongs to the Ap4A hydrolase family.

The catalysed reaction is P(1),P(4)-bis(5'-adenosyl) tetraphosphate + H2O = 2 ADP + 2 H(+). Hydrolyzes diadenosine 5',5'''-P1,P4-tetraphosphate to yield ADP. In Aromatoleum aromaticum (strain DSM 19018 / LMG 30748 / EbN1) (Azoarcus sp. (strain EbN1)), this protein is Bis(5'-nucleosyl)-tetraphosphatase, symmetrical.